Here is a 285-residue protein sequence, read N- to C-terminus: N(G),N(G)-dimethylarginine dimethylaminohydrolase 1 (285 aa).

An N-acetylalanine modification is found at Ala-2. Substrate is bound at residue Leu-30. A Phosphoserine modification is found at Ser-33. Substrate-binding residues include Asp-73, Glu-78, Asp-79, Arg-98, and Arg-145. The Proton donor role is filled by His-173. Cys-222 is modified (S-nitrosocysteine). Residue Val-268 coordinates substrate. Residue Cys-274 is modified to S-nitrosocysteine. Cys-274 (nucleophile) is an active-site residue. Zn(2+) is bound at residue Cys-274.

It belongs to the DDAH family. Monomer. In terms of tissue distribution, detected in skeletal muscle, lung, heart, liver, kidney and brain (at protein level).

The catalysed reaction is N(omega),N(omega)-dimethyl-L-arginine + H2O = dimethylamine + L-citrulline. It catalyses the reaction N(omega)-methyl-L-arginine + H2O = L-citrulline + methylamine. Inhibited by zinc ions. Functionally, hydrolyzes N(G),N(G)-dimethyl-L-arginine (ADMA) and N(G)-monomethyl-L-arginine (MMA) which act as inhibitors of NOS. Has therefore a role in the regulation of nitric oxide generation. This chain is N(G),N(G)-dimethylarginine dimethylaminohydrolase 1 (Ddah1), found in Mus musculus (Mouse).